Consider the following 443-residue polypeptide: Minovincinine 19-hydroxy-O-acetyltransferase (443 aa).

His157 serves as the catalytic Proton acceptor. Residues 215 to 222 (RKRFLFSP) carry the Nuclear localization signal motif. Positions 316-343 (TKLVIGELRKAKDKLKNLSQEKLNYVAR) form a coiled coil. The active-site Proton acceptor is the Asp384.

Belongs to the plant acyltransferase family. As to quaternary structure, monomer. Expressed in cortical cells of the root tip, especially in hairy roots, as well as in etiolated seedlings. Mostly expressed in roots, and, at lower levels, in leaves.

Its subcellular location is the cytoplasm. It localises to the nucleus. It carries out the reaction (+)-minovincinine + acetyl-CoA = (+)-echitovenine + CoA. It participates in alkaloid biosynthesis. Its function is as follows. Component of the monoterpenoid indole alkaloids (MIAs, e.g. echitovenine, tabersonine, lochnericine, 19-hydroxytabersonine and horhammericine) biosynthetic pathway; MIAs are used in cancer treatment and other medical applications. Acyltransferase catalyzing the conversion of (+)-minovincinine to (+)-echitovenine. This is Minovincinine 19-hydroxy-O-acetyltransferase from Catharanthus roseus (Madagascar periwinkle).